The primary structure comprises 364 residues: Putative protein C31H2.4 (364 aa).

VOC domains are found at residues 6-134 (AIHH…LGEF) and 161-320 (LMDH…IFSK). Residues His-164, His-248, and Glu-331 each coordinate Fe cation.

Belongs to the 4HPPD family. Fe cation is required as a cofactor.

This chain is Putative protein C31H2.4, found in Caenorhabditis elegans.